We begin with the raw amino-acid sequence, 65 residues long: Alpha-toxin OD1 (65 aa).

In terms of domain architecture, LCN-type CS-alpha/beta spans arginine 3–arginine 65. The short motif at aspartate 9–lysine 11 is the Important for toxin selectivity for individual Nav channel subtype (Nav1.6/SCN8A and Nav1.7/SCN9A), but not for toxin potency element. 4 disulfide bridges follow: cysteine 13–cysteine 64, cysteine 17–cysteine 37, cysteine 23–cysteine 47, and cysteine 27–cysteine 49. Arginine 65 bears the Arginine amide mark.

It belongs to the long (4 C-C) scorpion toxin superfamily. Sodium channel inhibitor family. Alpha subfamily. In terms of tissue distribution, expressed by the venom gland.

The protein resides in the secreted. In terms of biological role, alpha toxins bind voltage-independently at site-3 of sodium channels and inhibit the inactivation of the activated channels. The toxin affect mammalian sodium channels Nav1.7/SCN9A (EC(50)=4.5 nM), Nav1.4/SCN4A (EC(50)=9.6 nM), Nav1.6/SCN8A (EC(50)=30 nM), Nav1.5/SCN5A (only at micromolar concentrations), and insect sodium channel para/tipE (EC(50)=80 nM). In vivo, intraplantar administration of this toxin elicits pain behaviors, including licking and flinching of the hind paw. This is Alpha-toxin OD1 from Odontobuthus doriae (Yellow Iranian scorpion).